A 463-amino-acid polypeptide reads, in one-letter code: Succinate--CoA ligase [ADP-forming] subunit beta, mitochondrial (463 aa).

The N-terminal 53 residues, 1–53 (MAASMFYGRQLAAAALRSHRPQTTLRAAAQVLGNSGLFNKHGLQVQQQQQRTL), are a transit peptide targeting the mitochondrion. Residues 61–288 (MELLQEAGVS…SNSAYRQKKI (228 aa)) enclose the ATP-grasp domain. N6-acetyllysine is present on K78. A Phosphotyrosine modification is found at Y84. An N6-acetyllysine; alternate modification is found at K88. At K88 the chain carries N6-succinyllysine; alternate. Residues K98 and 105–107 (GRG) each bind ATP. K129, K139, K143, and K216 each carry N6-acetyllysine. The Mg(2+) site is built by N258 and D272. At S279 the chain carries Phosphoserine. Residue N323 participates in substrate binding. T341 carries the phosphothreonine modification. At K368 the chain carries N6-acetyllysine. 380–382 (GIM) contacts substrate. K438 carries the N6-acetyllysine modification.

This sequence belongs to the succinate/malate CoA ligase beta subunit family. ATP-specific subunit beta subfamily. As to quaternary structure, heterodimer of an alpha and a beta subunit. The beta subunit determines specificity for ATP. Interacts with ALAS2. The cofactor is Mg(2+).

It is found in the mitochondrion. The enzyme catalyses succinate + ATP + CoA = succinyl-CoA + ADP + phosphate. Its pathway is carbohydrate metabolism; tricarboxylic acid cycle; succinate from succinyl-CoA (ligase route): step 1/1. ATP-specific succinyl-CoA synthetase functions in the citric acid cycle (TCA), coupling the hydrolysis of succinyl-CoA to the synthesis of ATP and thus represents the only step of substrate-level phosphorylation in the TCA. The beta subunit provides nucleotide specificity of the enzyme and binds the substrate succinate, while the binding sites for coenzyme A and phosphate are found in the alpha subunit. This Mus musculus (Mouse) protein is Succinate--CoA ligase [ADP-forming] subunit beta, mitochondrial.